A 185-amino-acid chain; its full sequence is Ribosome-recycling factor (185 aa).

Belongs to the RRF family.

It localises to the cytoplasm. Responsible for the release of ribosomes from messenger RNA at the termination of protein biosynthesis. May increase the efficiency of translation by recycling ribosomes from one round of translation to another. The sequence is that of Ribosome-recycling factor from Chromohalobacter salexigens (strain ATCC BAA-138 / DSM 3043 / CIP 106854 / NCIMB 13768 / 1H11).